The primary structure comprises 1337 residues: Receptor-type tyrosine-protein phosphatase eta (1337 aa).

The first 35 residues, 1–35, serve as a signal peptide directing secretion; that stretch reads MKPAAREARLPPRSPGLRWALPLLLLLLRLGQILC. Residues 36–975 lie on the Extracellular side of the membrane; it reads AGGTPSPIPD…LPQDPGVICG (940 aa). Composition is skewed to polar residues over residues 67–82 and 89–119; these read SFHK…VETN and SSGA…STGP. A disordered region spans residues 67 to 124; it reads SFHKQNGTGTPQVETNTSEDGESSGANDSLRTPEQGSNGTDGASQKTPSSTGPSPVFD. Residues asparagine 72, asparagine 82, asparagine 93, asparagine 104, asparagine 142, asparagine 172, asparagine 192, asparagine 231, asparagine 258, asparagine 278, asparagine 342, asparagine 351, asparagine 376, asparagine 391, asparagine 396, asparagine 413, asparagine 431, asparagine 501, asparagine 525, asparagine 536, asparagine 582, asparagine 603, asparagine 618, asparagine 628, asparagine 637, asparagine 666, asparagine 669, asparagine 761, asparagine 772, asparagine 784, asparagine 790, asparagine 824, asparagine 910, and asparagine 937 are each glycosylated (N-linked (GlcNAc...) asparagine). Fibronectin type-III domains lie at 121 to 209, 207 to 291, 271 to 364, 368 to 456, 457 to 541, 542 to 623, 625 to 720, 721 to 817, and 816 to 902; these read PVFD…EPIP, PIPV…EGGL, NPYL…EFRT, QVFD…PPVP, VSDF…TVPS, AVFD…TAQY, RPSN…TDPA, SMAS…TDPP, and PPPP…SEVL. The disordered stretch occupies residues 278-327; that stretch reads NKTKGDPLGTEGGLDASNTERSRAGSPTAPVHDESLVGPVDPSSGQQSRD. The chain crosses the membrane as a helical span at residues 976–996; it reads AVFGCIFGALVIVTVGGFIFW. The Cytoplasmic segment spans residues 997–1337; it reads RKKRKDAKNN…TFGKTNGYIA (341 aa). Position 1009 is a phosphoserine (serine 1009). Residues 1041 to 1298 enclose the Tyrosine-protein phosphatase domain; the sequence is FAEEYEDLKL…VFLNQCVLDI (258 aa). Residues aspartate 1205, 1239–1245, and glutamine 1283 contribute to the substrate site; that span reads CSAGVGR. Catalysis depends on cysteine 1239, which acts as the Phosphocysteine intermediate.

The protein belongs to the protein-tyrosine phosphatase family. Receptor class 3 subfamily. In terms of assembly, monomer. Interacts with CTNNB1 (phosphorylated) and JUP (phosphorylated). Interacts with FLT3 (phosphorylated). Interacts with GAB1 and GRB2. Post-translationally, N- and O-glycosylated. N-glycosylated. In terms of tissue distribution, expressed in the promyelocytic cell line HL-60, the granulocyte-macrophage colony-stimulating factor-dependent leukemic cell line F-36P, and the IL3 and erythropoietin-dependent leukemic cell line F-36E. Expressed predominantly in epithelial cells and lymphocytes. Enhanced expression at high cell density. As to expression, expressed in the brain.

It localises to the cell membrane. The protein resides in the cell projection. It is found in the ruffle membrane. Its subcellular location is the cell junction. The protein localises to the secreted. It localises to the extracellular space. The enzyme catalyses O-phospho-L-tyrosyl-[protein] + H2O = L-tyrosyl-[protein] + phosphate. Functionally, tyrosine phosphatase which dephosphorylates or contributes to the dephosphorylation of CTNND1, FLT3, PDGFRB, MET, KDR, LYN, SRC, MAPK1, MAPK3, EGFR, TJP1, OCLN, PIK3R1 and PIK3R2. Plays a role in cell adhesion, migration, proliferation and differentiation. Has a role in megakaryocytes and platelet formation. Involved in vascular development. Regulator of macrophage adhesion and spreading. Positively affects cell-matrix adhesion. Positive regulator of platelet activation and thrombosis. Negative regulator of cell proliferation. Negative regulator of PDGF-stimulated cell migration; through dephosphorylation of PDGFR. Positive regulator of endothelial cell survival, as well as of VEGF-induced SRC and AKT activation; through KDR dephosphorylation. Negative regulator of EGFR signaling pathway; through EGFR dephosphorylation. Enhances the barrier function of epithelial junctions during reassembly. Negatively regulates T-cell receptor (TCR) signaling. Upon T-cell TCR activation, it is up-regulated and excluded from the immunological synapses, while upon T-cell-antigen presenting cells (APC) disengagement, it is no longer excluded and can dephosphorylate PLCG1 and LAT to down-regulate prolongation of signaling. Its function is as follows. Activates angiogenesis and cell migration. Downregulates the expression of the endothelial adhesion molecules ICAM1 and VCAM1. The polypeptide is Receptor-type tyrosine-protein phosphatase eta (PTPRJ) (Homo sapiens (Human)).